Here is a 371-residue protein sequence, read N- to C-terminus: S-adenosylmethionine:tRNA ribosyltransferase-isomerase (371 aa).

This sequence belongs to the QueA family. Monomer.

The protein localises to the cytoplasm. It catalyses the reaction 7-aminomethyl-7-carbaguanosine(34) in tRNA + S-adenosyl-L-methionine = epoxyqueuosine(34) in tRNA + adenine + L-methionine + 2 H(+). Its pathway is tRNA modification; tRNA-queuosine biosynthesis. Its function is as follows. Transfers and isomerizes the ribose moiety from AdoMet to the 7-aminomethyl group of 7-deazaguanine (preQ1-tRNA) to give epoxyqueuosine (oQ-tRNA). This is S-adenosylmethionine:tRNA ribosyltransferase-isomerase from Prochlorococcus marinus (strain MIT 9313).